We begin with the raw amino-acid sequence, 368 residues long: Chaperone protein DnaJ (368 aa).

Residues 5 to 69 (DYYEVLGLSQ…QKRAQYDQFG (65 aa)) form the J domain. Residues 130 to 212 (GKELNVEIPV…CHGSGKVRKR (83 aa)) form a CR-type zinc finger. Residues Cys-143, Cys-146, Cys-160, Cys-163, Cys-186, Cys-189, Cys-200, and Cys-203 each coordinate Zn(2+). 4 CXXCXGXG motif repeats span residues 143-150 (CDTCKGSG), 160-167 (CKHCSGSG), 186-193 (CGHCSGTG), and 200-207 (CTTCHGSG).

It belongs to the DnaJ family. Homodimer. It depends on Zn(2+) as a cofactor.

It is found in the cytoplasm. In terms of biological role, participates actively in the response to hyperosmotic and heat shock by preventing the aggregation of stress-denatured proteins and by disaggregating proteins, also in an autonomous, DnaK-independent fashion. Unfolded proteins bind initially to DnaJ; upon interaction with the DnaJ-bound protein, DnaK hydrolyzes its bound ATP, resulting in the formation of a stable complex. GrpE releases ADP from DnaK; ATP binding to DnaK triggers the release of the substrate protein, thus completing the reaction cycle. Several rounds of ATP-dependent interactions between DnaJ, DnaK and GrpE are required for fully efficient folding. Also involved, together with DnaK and GrpE, in the DNA replication of plasmids through activation of initiation proteins. This Bacillus mycoides (strain KBAB4) (Bacillus weihenstephanensis) protein is Chaperone protein DnaJ.